The chain runs to 2131 residues: MTGHEFKSWILELREILREIKNSHYFLDSWTQFNSVGSFIHIFFHQERFIKLFDSRIWSILLSHNSQGSTSNRYFTIKGVILFGVAVLIYRINNRNMVERKNLYLIGLLPIPMNSIGPRNDTLEESVGSSNINRLIVSLLYLPKGKKIYESSFLNPKESTWVLPITKKCSMPESNWGSRWWRDWIGKKSDSSCKISNETVAGIEILFKEKDLKYLEFVFVYYRDDPIRKDHGWEFFDRLSLRKRQNRINLNSGPLFEILVKHWICYLMSAFREKIPIEVEGFFKQQGAGSTIQSNDIEHVSHLFSRNKSRLFTEREKQMINHMLPEEIEEFLGNPTRSVRSFFSDRWSELHLGSNPTERSTRDQKLLKKQQDLSFLRRSEKKEMVNLFKIITYLQNTVSIHPISLDSGCDMVPKDEPDMDSSNKISFLNKNPFFDLFHLFHDRNRGGYTLHHDFESEDRFQEMADLFTLSITEPDLVYHKRFAFSIDSYGLDPKQFLNGVFNSRYEWKTTSLLVLFPIFYEENESFYRRIRKNRVRISCGNDLEEPKPKIVVFASNNIMEAVNQYRLIRNLIQIQHSTHRYIRNVLNRFFLMNRSDRNFEYGIQRDQIRKDTLNHRTLMKYTINQHLSNLKKSQKRWFDPLIFFYRTERSMNRDPDAYRYKWSTGSNNFQEHLEHFVSEQKSRLQVVFDRLRINPYSIDWSEVIDKKDLSKPLRFFLSKLLLFLSNSLPFLFVSFGNIPIHRSEIYIYQLKGPNDPQFLESIGLQIVHLKKLKPFLLDDHETCQKSKFLINGGTISPFLFNKIPKWMIDSFHTRNNRRKSFDNTDSYFSMIFHDQYNWLNPVKSFHRSSLRSSFYKGNQLRFLNNPHHFCFYCNKRFPFYVEKARINNYDFTYGQFLNILFIRNKIFSLCVGKKKHAFWGRDTISAIESQVSNIFIPKAFPQSGDETYNLYKSFHFPSRSNPFVRRAIYSIADISGTPLTEGQIVNFERTYCQPLSDMNLSDSEGKNLYQYLNFNSNMGLIHTPCSEKYLPSEKRKKRSLCLKKCVEKGQMYRTFQRDSAYSTLSKWNLFQTYMPWFLTSTGYRYLKFLFLDTFSDLLPILSSSQKFVSIFHDIMHGSDISWRILQKKFCLPQWNLISEISSKCFHNLLLSEEMIHRNNESPLISTHLTNVREFLYAILFLLLVAAYLVCTHLLFVFGASSELQAEFEKVKSLMIPSSMIELRKILDRYPTSEPNSFWLKNLFLVALKQLGDSLGGNMLLGGGPAYGVKSIRSKKKYLNINLIDIIDLISIIPNPINRITFSRNTRHLSHTSKEIYSLIRKRKNVNGDWIDDKIESWVANSDSIDDEKREFLVQFSTLTTEKRIDQILLSLTHSDHLSKNDSGYQMIEQPGAIYLRDLVDIHKKYLMNYEFNTSSLAERRIFLAHYQTITYSQTSCGANSFHFPSHGKPFSLRLALSLSRGILVIGSIGTGRSYLVKYLAKNSYLPFITVFLNKFLDNKSQGFDDIDIDDLDASDDLDASDDLDASDDLDASDDILDMELELLTSMNALTMNMMPEDEDQLYITLQFELAKAMSPCIIWIPNIHDLDVNESNYFSLGLLVNLLSRDYETRNILVIASTHIPQKVDPALIAPNKLNTCIKIRRLLIPQQRKHFFTLSYTRGFHLEKKMFHTNGFGSITMGSNARDLVALTNEALSISITQKKSIIDTNTIRSALHRQIWDLRSQVRSVQDHGILFYQIGRAVAQNVLLSNCPIDPISIYMKKKSCNEVDFYLYNWYFELGTSMKKLTILLYLLSCSAGSVTQDLWSLPGPDEKNGITPYGLVENDSGLVRGLLEVEGALVGSSRTCSQFDKDRVTLLLRPEPRNPLDMMQKGSCSILDQRFLYEKDESEFEEGEGALDRQQIEEDLFNHIVWAPRIWRPWGFLFDCIERPNELGFPYWSRSFRGKRIIYDKEDELQENDSEFLQSGTAQYQTRDRSSKEQGLFRISQFIWDPADPLFFLFKAQPFVSVFSHRELFADEEMSKGLLTPQTNPPTSLYKRWFIKKTQEKHFELLINRQRWLRTNRSLSNGSFRSNTLSESYQYLSNLFLSNGTLLDQMTKALLRKRWLFPDEMQIGFMEQEKDFPFLSRKDMWP.

1466 to 1473 (GSIGTGRS) lines the ATP pocket.

It belongs to the Ycf2 family.

It is found in the plastid. Its subcellular location is the chloroplast stroma. Functionally, probable ATPase of unknown function. Its presence in a non-photosynthetic plant (Epifagus virginiana) and experiments in tobacco indicate that it has an essential function which is probably not related to photosynthesis. In Helianthus annuus (Common sunflower), this protein is Protein Ycf2.